The following is a 149-amino-acid chain: Large ribosomal subunit protein uL13 (149 aa).

This sequence belongs to the universal ribosomal protein uL13 family. Part of the 50S ribosomal subunit.

Its function is as follows. This protein is one of the early assembly proteins of the 50S ribosomal subunit, although it is not seen to bind rRNA by itself. It is important during the early stages of 50S assembly. The polypeptide is Large ribosomal subunit protein uL13 (Borrelia turicatae (strain 91E135)).